Consider the following 243-residue polypeptide: Protein GIGAS CELL1 (243 aa).

In terms of assembly, interacts with APC/C activators such as FZR1, FZR2, FZR3, CDC20.1 and CDC20.5. Post-translationally, phosphorylated by CDKA-1 in complex with CYCA1-2. In terms of tissue distribution, expressed in rapidly dividing tissues such as shoot apical meristem and young leaves. Associated with cell division but also with specific cell types.

Functionally, negative regulator of the anaphase-promoting complex/cyclosome (APC/C) ubiquitin ligase required for proper mitotic and meiotic progression and cell fate determination. Involved in entry into both meiosis I and meiosis II. Prevents endomitosis by preferentially inhibiting APC/C(CDC20). Required for megagametophyte and endosperm development. Triggers mitotic cyclins (e.g. CYCB1-1 and CYCB1-2) accumulation. Confers immunity to bacterial pathogens (e.g. Pseudomonas syringae pv. tomato DC3000), which is associated with increased expression of disease resistance (R) genes. GIG1 and PANS1 are part of a network linking centromere cohesion and cell cycle progression through control of APC/C activity. The polypeptide is Protein GIGAS CELL1 (GIG1) (Arabidopsis thaliana (Mouse-ear cress)).